A 749-amino-acid chain; its full sequence is Disintegrin and metalloproteinase domain-containing protein 10 (749 aa).

Positions 1–18 (MGLLRLVFLLSWAASAGG) are cleaved as a signal peptide. Residues 19–213 (LYGNPLNKYI…SGPVILRKKR (195 aa)) constitute a propeptide that is removed on maturation. Residues 19–673 (LYGNPLNKYI…NPELYENIAE (655 aa)) lie on the Extracellular side of the membrane. Positions 170–177 (GGCADSSV) match the Cysteine switch motif. Cysteine 172 serves as a coordination point for Zn(2+). In terms of domain architecture, Peptidase M12B spans 220–457 (NTCQLFIQTD…KENSCFVESG (238 aa)). 17 disulfide bridges follow: cysteine 222/cysteine 314, cysteine 345/cysteine 452, cysteine 400/cysteine 436, cysteine 461/cysteine 496, cysteine 472/cysteine 485, cysteine 474/cysteine 480, cysteine 484/cysteine 516, cysteine 504/cysteine 512, cysteine 511/cysteine 537, cysteine 525/cysteine 544, cysteine 531/cysteine 563, cysteine 556/cysteine 568, cysteine 573/cysteine 599, cysteine 581/cysteine 608, cysteine 583/cysteine 598, cysteine 595/cysteine 640, and cysteine 633/cysteine 646. N-linked (GlcNAc...) asparagine glycans are attached at residues asparagine 268 and asparagine 279. Histidine 384 serves as a coordination point for Zn(2+). Glutamate 385 is a catalytic residue. Positions 388 and 394 each coordinate Zn(2+). The N-linked (GlcNAc...) asparagine glycan is linked to asparagine 440. Positions 458–552 (QPICGNGLVE…QCPPSEPREN (95 aa)) constitute a Disintegrin domain. N-linked (GlcNAc...) asparagine glycosylation is present at asparagine 552. A helical transmembrane segment spans residues 674 to 694 (WIVAHWWAVLLMGIALIMLMA). Residues 695–749 (GFIKICSVHTPSSNPKLPPPKPLPGTLKRRRPPQTTQQPSRQRPRENYQMGHMRH) are Cytoplasmic-facing. The segment at 705-749 (PSSNPKLPPPKPLPGTLKRRRPPQTTQQPSRQRPRENYQMGHMRH) is disordered. The short motif at 709 to 716 (PKLPPPKP) is the SH3-binding element. At threonine 720 the chain carries Phosphothreonine. The SH3-binding motif lies at 723-729 (RRRPPQT).

The cofactor is Zn(2+). In terms of processing, the precursor is cleaved by furin and PCSK7.

Its subcellular location is the membrane. It carries out the reaction Endopeptidase of broad specificity.. Its function is as follows. Controls the proteolytic processing of Notch and mediates lateral inhibition during neurogenesis. The chain is Disintegrin and metalloproteinase domain-containing protein 10 (adam10) from Xenopus laevis (African clawed frog).